A 636-amino-acid chain; its full sequence is 1-deoxy-D-xylulose-5-phosphate synthase (636 aa).

Thiamine diphosphate contacts are provided by residues histidine 72 and glycine 113–alanine 115. Residue aspartate 144 participates in Mg(2+) binding. Thiamine diphosphate is bound by residues glycine 145–serine 146, asparagine 174, tyrosine 287, and glutamate 370. Residue asparagine 174 coordinates Mg(2+).

The protein belongs to the transketolase family. DXPS subfamily. As to quaternary structure, homodimer. Requires Mg(2+) as cofactor. Thiamine diphosphate is required as a cofactor.

It catalyses the reaction D-glyceraldehyde 3-phosphate + pyruvate + H(+) = 1-deoxy-D-xylulose 5-phosphate + CO2. Its pathway is metabolic intermediate biosynthesis; 1-deoxy-D-xylulose 5-phosphate biosynthesis; 1-deoxy-D-xylulose 5-phosphate from D-glyceraldehyde 3-phosphate and pyruvate: step 1/1. Catalyzes the acyloin condensation reaction between C atoms 2 and 3 of pyruvate and glyceraldehyde 3-phosphate to yield 1-deoxy-D-xylulose-5-phosphate (DXP). The chain is 1-deoxy-D-xylulose-5-phosphate synthase from Synechococcus sp. (strain ATCC 27144 / PCC 6301 / SAUG 1402/1) (Anacystis nidulans).